Consider the following 27-residue polypeptide: Cupiennin-4a (27 aa).

Residue Glu27 is modified to Glutamic acid 1-amide.

Expressed by the venom gland.

It is found in the secreted. This is Cupiennin-4a from Cupiennius salei (American wandering spider).